The primary structure comprises 283 residues: Glutamate racemase (283 aa).

Residues Asp13–Ser14 and Tyr45–Gly46 contribute to the substrate site. Cys76 acts as the Proton donor/acceptor in catalysis. Asn77–Thr78 is a substrate binding site. Cys186 (proton donor/acceptor) is an active-site residue. Thr187–His188 contacts substrate.

It belongs to the aspartate/glutamate racemases family.

It catalyses the reaction L-glutamate = D-glutamate. It participates in cell wall biogenesis; peptidoglycan biosynthesis. Functionally, provides the (R)-glutamate required for cell wall biosynthesis. In Microcystis aeruginosa (strain NIES-843 / IAM M-2473), this protein is Glutamate racemase.